Reading from the N-terminus, the 283-residue chain is NAD kinase (283 aa).

The active-site Proton acceptor is the D69. NAD(+)-binding positions include 69-70, 138-139, K166, D168, L176, 179-184, and Q235; these read DG, NE, and TAYNLS.

The protein belongs to the NAD kinase family. A divalent metal cation is required as a cofactor.

It localises to the cytoplasm. It carries out the reaction NAD(+) + ATP = ADP + NADP(+) + H(+). Involved in the regulation of the intracellular balance of NAD and NADP, and is a key enzyme in the biosynthesis of NADP. Catalyzes specifically the phosphorylation on 2'-hydroxyl of the adenosine moiety of NAD to yield NADP. The protein is NAD kinase of Helicobacter acinonychis (strain Sheeba).